We begin with the raw amino-acid sequence, 484 residues long: Glycogen synthase (484 aa).

Residue K20 participates in ADP-alpha-D-glucose binding.

This sequence belongs to the glycosyltransferase 1 family. Bacterial/plant glycogen synthase subfamily.

It catalyses the reaction [(1-&gt;4)-alpha-D-glucosyl](n) + ADP-alpha-D-glucose = [(1-&gt;4)-alpha-D-glucosyl](n+1) + ADP + H(+). It functions in the pathway glycan biosynthesis; glycogen biosynthesis. Synthesizes alpha-1,4-glucan chains using ADP-glucose. The polypeptide is Glycogen synthase (Vibrio atlanticus (strain LGP32) (Vibrio splendidus (strain Mel32))).